The chain runs to 552 residues: Outer dynein arm protein 1 (552 aa).

Residues M1–L27 form a disordered region. The segment covering R8–G22 has biased composition (gly residues). Coiled-coil stretches lie at residues G28–K59, S120–L260, and T331–R395. 2 disordered regions span residues N482–H515 and L528–R552. Positions Q493–E506 are enriched in acidic residues.

This sequence belongs to the ODA1/DCC2 family. In terms of assembly, component of the outer dynein arm complex.

It is found in the cytoplasm. It localises to the cytoskeleton. Its subcellular location is the cilium axoneme. Functionally, component of the outer dynein arm complex required for assembly of the outer dynein arm-docking complex (ODA-DC) and the outer dynein arm onto the doublet microtubule. The chain is Outer dynein arm protein 1 (ODA1) from Chlamydomonas reinhardtii (Chlamydomonas smithii).